Here is a 704-residue protein sequence, read N- to C-terminus: Protein kinase C-like 1 (704 aa).

Phosphothreonine; by autocatalysis occurs at positions 89 and 139. Phorbol-ester/DAG-type zinc fingers lie at residues 165–215 (GHQF…IMQC) and 237–287 (PHRF…SNLC). T324 is modified (phosphothreonine; by autocatalysis). The Protein kinase domain maps to 375 to 634 (FNLLKVLGKG…DGPIRQHCFF (260 aa)). ATP-binding positions include 381 to 389 (LGKGSFGKV) and K404. The active-site Proton acceptor is D499. The region spanning 635–704 (RGVDWKRFEN…FSYTNPHFSK (70 aa)) is the AGC-kinase C-terminal domain.

It belongs to the protein kinase superfamily. AGC Ser/Thr protein kinase family. PKC subfamily.

It carries out the reaction L-seryl-[protein] + ATP = O-phospho-L-seryl-[protein] + ADP + H(+). It catalyses the reaction L-threonyl-[protein] + ATP = O-phospho-L-threonyl-[protein] + ADP + H(+). Diacylglycerol (DAG)-dependent serine/threonine-protein kinase that phosphorylates a range of cellular proteins. Phosphorylates mlk-1, a component of the JNK pathway. Involved in axon regeneration after injury probably by activating the JNK pathway. Plays a role in resistance to fungal infection and in wound healing by promoting expression of antimicrobial peptide nlp-29 in the epidermis downstream of gpa-12 and plc-3 and upstream of tir-1-p38-like pathway. Probably by regulating neuronal transmission in ALA neurons, regulates the decrease in pharyngeal pumping during the quiescent state that precedes each larval molt, downstream of lin-3 and receptor let-23 and phospholipase plc-3. The polypeptide is Protein kinase C-like 1 (tpa-1) (Caenorhabditis elegans).